Consider the following 491-residue polypeptide: UDP-N-acetylmuramate--L-alanine ligase (491 aa).

Residue 126 to 132 (GTHGKTT) participates in ATP binding.

Belongs to the MurCDEF family.

The protein resides in the cytoplasm. The catalysed reaction is UDP-N-acetyl-alpha-D-muramate + L-alanine + ATP = UDP-N-acetyl-alpha-D-muramoyl-L-alanine + ADP + phosphate + H(+). It functions in the pathway cell wall biogenesis; peptidoglycan biosynthesis. Cell wall formation. The polypeptide is UDP-N-acetylmuramate--L-alanine ligase (Shigella flexneri serotype 5b (strain 8401)).